Consider the following 528-residue polypeptide: D-3-phosphoglycerate dehydrogenase (528 aa).

NAD(+) is bound by residues 151–152, Asp-171, 230–232, and Asp-256; these read RI and AAR. Arg-232 is a catalytic residue. Glu-261 is a catalytic residue. The Proton donor role is filled by His-279. 279 to 282 serves as a coordination point for NAD(+); the sequence is HLGA. The 74-residue stretch at 455 to 528 folds into the ACT domain; that stretch reads NLVIRYVDQP…ANKLEVVNLS (74 aa).

This sequence belongs to the D-isomer specific 2-hydroxyacid dehydrogenase family.

It catalyses the reaction (2R)-3-phosphoglycerate + NAD(+) = 3-phosphooxypyruvate + NADH + H(+). The catalysed reaction is (R)-2-hydroxyglutarate + NAD(+) = 2-oxoglutarate + NADH + H(+). It participates in amino-acid biosynthesis; L-serine biosynthesis; L-serine from 3-phospho-D-glycerate: step 1/3. Its function is as follows. Catalyzes the reversible oxidation of 3-phospho-D-glycerate to 3-phosphonooxypyruvate, the first step of the phosphorylated L-serine biosynthesis pathway. Also catalyzes the reversible oxidation of 2-hydroxyglutarate to 2-oxoglutarate. The protein is D-3-phosphoglycerate dehydrogenase (serA) of Mycobacterium leprae (strain TN).